The following is a 344-amino-acid chain: Polyhomeotic-like protein 2 (344 aa).

The span at 1-23 (MTSGNGSSPVPTAATGNRTQNGE) shows a compositional bias: polar residues. The tract at residues 1-28 (MTSGNGSSPVPTAATGNRTQNGENKPPQ) is disordered. The HD1 motif lies at 25–53 (KPPQAVVKPQILTHFIEGFVIQEGAQPFP). The FCS-type zinc finger occupies 114–148 (GDGDPPKLKCELCGRVDFEYKFKRSKRFCSMACAK). Positions 123, 126, 142, and 146 each coordinate Zn(2+). Positions 165-269 (RSKLQKPTVA…LHSRDPIAMS (105 aa)) are disordered. Basic residues predominate over residues 173–183 (VAKHARRRSRK). Residues 216 to 233 (KLSNSQEDSSRCSDNSSY) are compositionally biased toward polar residues. Positions 234–248 (EEPLSPMSASSSLSR) are enriched in low complexity. The region spanning 280-344 (WNVEDVYDFV…YARISMLKDS (65 aa)) is the SAM domain.

In terms of assembly, component of a PRC1-like complex.

It is found in the nucleus. Its function is as follows. Component of a Polycomb group (PcG) multiprotein PRC1-like complex, a complex class required to maintain the transcriptionally repressive state of many genes, including Hox genes, throughout development. PcG PRC1 complex acts via chromatin remodeling and modification of histones; it mediates monoubiquitination of histone H2A 'Lys-119', rendering chromatin heritably changed in its expressibility. The protein is Polyhomeotic-like protein 2 (phc2) of Xenopus laevis (African clawed frog).